An 85-amino-acid chain; its full sequence is Beta-insect depressant toxin Lqh-dprIT3b (85 aa).

The N-terminal stretch at Met-1–Ala-21 is a signal peptide. The LCN-type CS-alpha/beta domain occupies Asp-22 to Gly-82. 4 cysteine pairs are disulfide-bonded: Cys-31–Cys-81, Cys-35–Cys-56, Cys-42–Cys-63, and Cys-46–Cys-65. The residue at position 82 (Gly-82) is a Glycine amide.

Belongs to the long (4 C-C) scorpion toxin superfamily. Sodium channel inhibitor family. Beta subfamily. In terms of tissue distribution, expressed by the venom gland.

Its subcellular location is the secreted. Its function is as follows. Depressant insect beta-toxins cause a transient contraction paralysis followed by a slow flaccid paralysis. They bind voltage-independently at site-4 of sodium channels (Nav) and block action potentials, primarily by depolarizing the axonal membrane and suppressing the sodium current. This depressant toxin is active only on insects. It is found in a relatively small amount in the venom, and its activity on insects is 10-fold higher compared to other known depressant toxins. The polypeptide is Beta-insect depressant toxin Lqh-dprIT3b (Leiurus hebraeus (Hebrew deathstalker scorpion)).